Reading from the N-terminus, the 102-residue chain is Large ribosomal subunit protein bL21 (102 aa).

It belongs to the bacterial ribosomal protein bL21 family. As to quaternary structure, part of the 50S ribosomal subunit. Contacts protein L20.

Its function is as follows. This protein binds to 23S rRNA in the presence of protein L20. This is Large ribosomal subunit protein bL21 from Enterococcus faecalis (strain ATCC 700802 / V583).